Consider the following 150-residue polypeptide: MRVVIQRVSHASVTIEGVCKSAIKEGFMILVGIEEADTQEDADWLCKKIIGLRVFDDENGVMNKSILEVGGNILVISQFTLHASTKKGNRPSYIRAAKHDVAIPLYNYFCQELSIGLGKEVGTGEFGADMKVELLNNGPVTICMDTKNKE.

The Gly-cisPro motif, important for rejection of L-amino acids signature appears at 138–139 (GP).

It belongs to the DTD family. In terms of assembly, homodimer.

It localises to the cytoplasm. The enzyme catalyses glycyl-tRNA(Ala) + H2O = tRNA(Ala) + glycine + H(+). The catalysed reaction is a D-aminoacyl-tRNA + H2O = a tRNA + a D-alpha-amino acid + H(+). An aminoacyl-tRNA editing enzyme that deacylates mischarged D-aminoacyl-tRNAs. Also deacylates mischarged glycyl-tRNA(Ala), protecting cells against glycine mischarging by AlaRS. Acts via tRNA-based rather than protein-based catalysis; rejects L-amino acids rather than detecting D-amino acids in the active site. By recycling D-aminoacyl-tRNA to D-amino acids and free tRNA molecules, this enzyme counteracts the toxicity associated with the formation of D-aminoacyl-tRNA entities in vivo and helps enforce protein L-homochirality. This Phocaeicola vulgatus (strain ATCC 8482 / DSM 1447 / JCM 5826 / CCUG 4940 / NBRC 14291 / NCTC 11154) (Bacteroides vulgatus) protein is D-aminoacyl-tRNA deacylase.